Consider the following 701-residue polypeptide: CRS2-associated factor 1, chloroplastic (701 aa).

A chloroplast-targeting transit peptide spans 1-77; the sequence is MATSHLTSRS…ENGEPAAGVR (77 aa). 2 consecutive CRM domains span residues 183 to 279 and 301 to 397; these read EPLT…TRPI and DGLT…LPPL. The tract at residues 581–603 is CRS2 binding; it reads GILLLFKQAIDSGMALVLNENEF.

As to quaternary structure, interacts with CRS2 and RNA. Part of large ribonucleo-protein complexes that include group IIB introns, CRS2 and CAF1.

The protein localises to the plastid. The protein resides in the chloroplast stroma. In terms of biological role, required for the splicing of group IIB introns in chloroplasts. Forms splicing particles with CRS2. Interacts with RNA and confers intron specificity of the splicing particles. This Oryza sativa subsp. japonica (Rice) protein is CRS2-associated factor 1, chloroplastic.